Here is an 857-residue protein sequence, read N- to C-terminus: Envelope glycoprotein gp160 (857 aa).

The signal sequence occupies residues 1-26 (MAHTSNHLFILLLLISVYGFLGHKKN). The Extracellular segment spans residues 27 to 682 (YVTVFYGIPA…FTSWMAYIRL (656 aa)). N39 carries an N-linked (GlcNAc...) asparagine; by host glycan. Cysteines 46 and 59 form a disulfide. Residues N72, N81, N116, N121, N142, N150, N167, N193, N205, N237, N240, N271, N277, N288, N299, N309, N364, N397, N407, N447, N464, and N469 are each glycosylated (N-linked (GlcNAc...) asparagine; by host). Cystine bridges form between C103-C213, C110-C204, C115-C164, C226-C256, and C236-C248. The V1 stretch occupies residues 115–163 (CNNTGTNTTTKPITTPITTTKPSENLLNDTSPCIKNDTCPGIGLENTVD). The tract at residues 164–204 (CYFNMTGLRRDEKKQYKDTWYEKDLECNGNSTSTICYMRTC) is V2. The tract at residues 304-336 (CRRPGNKTVIPITIMSGLNFHSQPLNTRPRQAW) is V3. A disulfide bond links C304 and C337. 2 disulfides stabilise this stretch: C389–C446 and C396–C419. The tract at residues 396 to 419 (CNMTWFLNWVENRTGTTQKNYVTC) is V4. The V5 stretch occupies residues 464–472 (NDTKTNITM). A fusion peptide region spans residues 515-535 (GVMVLGFLGLLAMAGSAMGAT). An immunosuppression region spans residues 578–594 (LQTRVTAIEKYLKDQAL). Residues N614, N623, and N639 are each glycosylated (N-linked (GlcNAc...) asparagine; by host). Positions 627 to 648 (QQWEKRVNFLDANITALLEEAQ) form a coiled coil. An MPER; binding to GalCer region spans residues 660-681 (KLNSWDVFGNWFDFTSWMAYIR). A helical transmembrane segment spans residues 683–703 (GLYVVAGLIVLRIVIYIMQML). Topologically, residues 704-857 (ARLRKGYRPV…IRQGLELALL (154 aa)) are cytoplasmic. The YXXV motif; contains endocytosis signal motif lies at 710-713 (YRPV). Residue C776 is the site of S-palmitoyl cysteine; by host attachment. The Di-leucine internalization motif motif lies at 856–857 (LL).

The mature envelope protein (Env) consists of a homotrimer of non-covalently associated gp120-gp41 heterodimers. The resulting complex protrudes from the virus surface as a spike. There seems to be as few as 10 spikes on the average virion. Interacts with human CD4, CCR5 and CXCR4, to form a P4HB/PDI-CD4-CXCR4-gp120 complex. Gp120 also interacts with the C-type lectins CD209/DC-SIGN and CLEC4M/DC-SIGNR (collectively referred to as DC-SIGN(R)). Gp120 and gp41 interact with GalCer. As to quaternary structure, the mature envelope protein (Env) consists of a homotrimer of non-covalently associated gp120-gp41 heterodimers. The resulting complex protrudes from the virus surface as a spike. There seems to be as few as 10 spikes on the average virion. Specific enzymatic cleavages in vivo yield mature proteins. Envelope glycoproteins are synthesized as an inactive precursor that is heavily N-glycosylated and processed likely by host cell furin in the Golgi to yield the mature SU and TM proteins. The cleavage site between SU and TM requires the minimal sequence [KR]-X-[KR]-R. In terms of processing, palmitoylation of the transmembrane protein and of Env polyprotein (prior to its proteolytic cleavage) is essential for their association with host cell membrane lipid rafts. Palmitoylation is therefore required for envelope trafficking to classical lipid rafts, but not for viral replication.

The protein localises to the virion membrane. It is found in the host cell membrane. The protein resides in the host endosome membrane. Functionally, the surface protein gp120 (SU) attaches the virus to the host lymphoid cell by binding to the primary receptor CD4. This interaction induces a structural rearrangement creating a high affinity binding site for a chemokine coreceptor like CXCR4 and/or CCR5. This peculiar 2 stage receptor-interaction strategy allows gp120 to maintain the highly conserved coreceptor-binding site in a cryptic conformation, protected from neutralizing antibodies. Since CD4 also displays a binding site for the disulfide-isomerase P4HB/PDI, a P4HB/PDI-CD4-CXCR4-gp120 complex may form. In that complex, P4HB/PDI could reach and reduce gp120 disulfide bonds, causing major conformational changes in gp120. TXN, another PDI family member could also be involved in disulfide rearrangements in Env during fusion. These changes are transmitted to the transmembrane protein gp41 and are thought to activate its fusogenic potential by unmasking its fusion peptide. The surface protein gp120 is a ligand for CD209/DC-SIGN and CLEC4M/DC-SIGNR, which are respectively found on dendritic cells (DCs), and on endothelial cells of liver sinusoids and lymph node sinuses. These interactions allow capture of viral particles at mucosal surfaces by these cells and subsequent transmission to permissive cells. DCs are professional antigen presenting cells, critical for host immunity by inducing specific immune responses against a broad variety of pathogens. They act as sentinels in various tissues where they take up antigen, process it, and present it to T-cells following migration to lymphoid organs. HIV subverts the migration properties of dendritic cells to gain access to CD4+ T-cells in lymph nodes. Virus transmission to permissive T-cells occurs either in trans (without DCs infection, through viral capture and transmission), or in cis (following DCs productive infection, through the usual CD4-gp120 interaction), thereby inducing a robust infection. In trans infection, bound virions remain infectious over days and it is proposed that they are not degraded, but protected in non-lysosomal acidic organelles within the DCs close to the cell membrane thus contributing to the viral infectious potential during DCs' migration from the periphery to the lymphoid tissues. On arrival at lymphoid tissues, intact virions recycle back to DCs' cell surface allowing virus transmission to CD4+ T-cells. Virion capture also seems to lead to MHC-II-restricted viral antigen presentation, and probably to the activation of HIV-specific CD4+ cells. In terms of biological role, the transmembrane protein gp41 (TM) acts as a class I viral fusion protein. Under the current model, the protein has at least 3 conformational states: pre-fusion native state, pre-hairpin intermediate state, and post-fusion hairpin state. During fusion of viral and target intracellular membranes, the coiled coil regions (heptad repeats) assume a trimer-of-hairpins structure, positioning the fusion peptide in close proximity to the C-terminal region of the ectodomain. The formation of this structure appears to drive apposition and subsequent fusion of viral and target cell membranes. Complete fusion occurs in host cell endosomes and is dynamin-dependent, however some lipid transfer might occur at the plasma membrane. The virus undergoes clathrin-dependent internalization long before endosomal fusion, thus minimizing the surface exposure of conserved viral epitopes during fusion and reducing the efficacy of inhibitors targeting these epitopes. Membranes fusion leads to delivery of the nucleocapsid into the cytoplasm. Its function is as follows. The envelope glycoprotein gp160 precursor down-modulates cell surface CD4 antigen by interacting with it in the endoplasmic reticulum and blocking its transport to the cell surface. Functionally, the gp120-gp41 heterodimer seems to contribute to T-cell depletion during HIV-1 infection. The envelope glycoproteins expressed on the surface of infected cells induce apoptosis through an interaction with uninfected cells expressing the receptor (CD4) and the coreceptors CXCR4 or CCR5. This type of bystander killing may be obtained by at least three distinct mechanisms. First, the interaction between the 2 cells can induce cellular fusion followed by nuclear fusion within the syncytium. Syncytia are condemned to die from apoptosis. Second, the 2 interacting cells may not fuse entirely and simply exchange plasma membrane lipids, after a sort of hemifusion process, followed by rapid death. Third, it is possible that virus-infected cells, on the point of undergoing apoptosis, fuse with CD4-expressing cells, in which case apoptosis is rapidly transmitted from one cell to the other and thus occurs in a sort of contagious fashion. The gp120-gp41 heterodimer allows rapid transcytosis of the virus through CD4 negative cells such as simple epithelial monolayers of the intestinal, rectal and endocervical epithelial barriers. Both gp120 and gp41 specifically recognize glycosphingolipids galactosyl-ceramide (GalCer) or 3' sulfo-galactosyl-ceramide (GalS) present in the lipid rafts structures of epithelial cells. Binding to these alternative receptors allows the rapid transcytosis of the virus through the epithelial cells. This transcytotic vesicle-mediated transport of virions from the apical side to the basolateral side of the epithelial cells does not involve infection of the cells themselves. This Homo sapiens (Human) protein is Envelope glycoprotein gp160 (env).